We begin with the raw amino-acid sequence, 793 residues long: MIKNHFQIQRLKKILAKVKSFESEMAGLTDAELRKKTQEFKERLAAGETLDDLLPEAYAVVREADKRVLGMFPYDVQVMGAIVLHEGNVAEMATGEGKTLTATMPLYLNALSGQGAMLVTTNTYLALRDAQEMGQVYRFLGLTIEAAVVADETENLTPKQKRLIYQADIVYTTNSALGFDYLIENLAENKDSQYLSPFNYVIIDEIDSILLDSAQVPLVISGAPRVQSNFYSIMDTFITTLKEEEDYHYDDEKNEVWLTSKGILAAESFLDLEHLFSKENQELVRHLNLALRAHKLYKKDKDYVVRQGDKEAEVVLLDRATGRLLEMTRLQGGQHQAIEAKEHVKLTEETRAMASITYQNLFRLFRKISGMTGTGKVVESEFMETYSMSVIKIPTNQPVIRQDLPDQLYQTLPEKVFASLDEVKHYHAQGNPLLIFTGSVEMSEIYSSLLLREGIAHNLLNANNAAREAQIIAESGQKGAVTVATSMAGRGTDIKLGPGVADLGGLVVIGTERMENQRIDLQIRGRSGRQGDPGISKFFISLEDDLLRKWGPDWLKKLYKDYSTEEVQQHPVQLGQRRFRRLVAKAQRASESSAKMSRRMTLEYAQCMKIQREITYAERNRLIQAEERIDEEISRVLSQVIHQAAYEQSYETRADLYRFILDHFSYHAERIPYDFDIYSPEKIAELLQDIAEQELQAKKAYLKSDKLFTHFQRVSVLKAIDENWVEQVDYLQQLKTALSGQHFSMKNPLVEYYQEAYDGFEYMKERMKQQIVKNLLMSELALNPKGEVIMYFP.

ATP contacts are provided by residues Gln77, 95–99 (GEGKT), and Asp493.

It belongs to the SecA family. As to quaternary structure, monomer and homodimer. Part of the essential Sec protein translocation apparatus which comprises SecA, SecYEG and auxiliary proteins SecDF. Other proteins may also be involved.

The protein localises to the cell membrane. It localises to the cytoplasm. The catalysed reaction is ATP + H2O + cellular proteinSide 1 = ADP + phosphate + cellular proteinSide 2.. Part of the Sec protein translocase complex. Interacts with the SecYEG preprotein conducting channel. Has a central role in coupling the hydrolysis of ATP to the transfer of proteins into and across the cell membrane, serving as an ATP-driven molecular motor driving the stepwise translocation of polypeptide chains across the membrane. The chain is Protein translocase subunit SecA 2 from Streptococcus sanguinis (strain SK36).